A 969-amino-acid polypeptide reads, in one-letter code: Manganese resistance protein MNR2 (969 aa).

Positions 1–11 are enriched in basic and acidic residues; sequence MSTDNSQKDEG. 4 disordered regions span residues 1–49, 96–153, 167–186, and 199–256; these read MSTD…SRRP, GAFI…DLSP, HKSF…NANN, and VNNN…NNSS. Over 1 to 912 the chain is Cytoplasmic; sequence MSTDNSQKDE…DMNDVLGKIT (912 aa). Residues 13 to 23 are compositionally biased toward low complexity; it reads PLLSPYSSSPQ. Basic residues predominate over residues 24-36; it reads LRKKKRNQKRRKD. Residues 37-48 show a composition bias toward basic and acidic residues; that stretch reads KFVGHLKSDSRR. Phosphoserine is present on Ser-114. Over residues 141 to 152 the composition is skewed to polar residues; it reads SDQNRSLVSDLS. Ser-175 bears the Phosphoserine mark. A Phosphothreonine modification is found at Thr-177. A Phosphoserine modification is found at Ser-182. Low complexity-rich tracts occupy residues 225–234 and 244–256; these read NKNSKSTSSD and SRPS…NNSS. Position 383 is a phosphoserine (Ser-383). Disordered stretches follow at residues 559 to 662 and 746 to 769; these read VRRR…KPRE and QSDD…DEDA. Over residues 565–578 the composition is skewed to basic and acidic residues; that stretch reads EKQESATLDHESIS. Thr-571 bears the Phosphothreonine mark. Phosphoserine is present on residues Ser-576 and Ser-582. Low complexity-rich tracts occupy residues 590 to 607 and 622 to 632; these read SNES…ASRS and ANRTTNTSSSS. Over residues 749 to 769 the composition is skewed to acidic residues; it reads DSSDSDSSDSDSDSGASDEDA. A helical transmembrane segment spans residues 913 to 933; sequence ILGTIVLPMNVITGLWGMNVI. The Extracellular segment spans residues 934–941; it reads VPGQYRDS. Residues 942–962 traverse the membrane as a helical segment; it reads LTWFIGIVLFMCMLACSAYMY. At 963–969 the chain is on the cytoplasmic side; it reads TKRRFGF.

The protein belongs to the CorA metal ion transporter (MIT) (TC 1.A.35) family.

It localises to the membrane. This is Manganese resistance protein MNR2 (MNR2) from Saccharomyces cerevisiae (strain ATCC 204508 / S288c) (Baker's yeast).